A 366-amino-acid polypeptide reads, in one-letter code: Zinc-regulated GTPase metalloprotein activator 1 (366 aa).

A psi-PxLVp motif motif is present at residues 5–12 (DECPELVP). 31–38 (GYLGAGKT) serves as a coordination point for GTP. Residues Cys89, Cys91, and Cys92 each contribute to the Zn(2+) site. Residues 89 to 92 (CLCC) carry the CXCC motif motif. Residues 92–96 (CSVKD) and 185–188 (NKTD) each bind GTP. In terms of domain architecture, CobW C-terminal spans 258–357 (TITFEVPGSV…GEILKKEFIS (100 aa)).

This sequence belongs to the SIMIBI class G3E GTPase family. ZNG1 subfamily.

The protein resides in the nucleus. The catalysed reaction is GTP + H2O = GDP + phosphate + H(+). Its function is as follows. Zinc chaperone that directly transfers zinc cofactor to target metalloproteins, thereby activating them. Catalyzes zinc insertion into the active site of methionine aminopeptidase METAP1, which function to cleave the initiator methionine from polypeptides during or after protein translation. Mechanistically, the N-terminal psi-PxLVp motif binds to the C6H2-type zinc finger of inactive form of METAP1. After formation of the docked complex, zinc is transferred from the CXCC motif in the GTPase domain of ZNG1 to the zinc binding site in the peptidase domain of METAP1 in a process requiring GTP hydrolysis. GTP/GDP exchange is required for release of active METAP1. This Danio rerio (Zebrafish) protein is Zinc-regulated GTPase metalloprotein activator 1.